A 354-amino-acid chain; its full sequence is MFDKIEELERRYQELEALLSDPAVISNQPEFRKLSREHADLTGLVAAYRRYRRVLEEMEGNRELLADVDMKEMAEEELKVLEEEKERLEGEIQMLLLPRDPNDDKSVILEIRAGTGGDESALFAGDLFRMYSRFADVNRWKVETISASESERGGFKEIIASVEGEGVFAKLKYESGTHRVQRVPETEAQGRIHTSACTVAIMAEAEDVDIDINPTDLKIDVYRSSGAGGQHVNTTDSAVRITHLPTGTVVACQEERSQIKNRAKAMKVLKTRIMDSIQQEQNARMAADRKQQVGSGDRSERIRTYNFPQGRMTDHRIGLTLYRLDAIMAGDIAEIVDALRAHYQMEALKAQSEE.

Residue Q230 is modified to N5-methylglutamine.

This sequence belongs to the prokaryotic/mitochondrial release factor family. Post-translationally, methylated by PrmC. Methylation increases the termination efficiency of RF1.

The protein resides in the cytoplasm. Peptide chain release factor 1 directs the termination of translation in response to the peptide chain termination codons UAG and UAA. This is Peptide chain release factor 1 from Pelobacter propionicus (strain DSM 2379 / NBRC 103807 / OttBd1).